A 110-amino-acid polypeptide reads, in one-letter code: Protein RnfH (110 aa).

The disordered stretch occupies residues 90 to 110 (VDKTRREGSIEGRKWLPKDSR).

This sequence belongs to the UPF0125 (RnfH) family.

The protein is Protein RnfH of Burkholderia mallei (strain NCTC 10229).